Here is a 363-residue protein sequence, read N- to C-terminus: Protein-arginine kinase (363 aa).

Positions isoleucine 24–alanine 254 constitute a Phosphagen kinase C-terminal domain. Residues serine 27–arginine 31, histidine 92, arginine 125, arginine 176–methionine 180, and arginine 207–glutamate 212 each bind ATP. An RDXXRA motif of the pArg binding pocket involved in allosteric regulation motif is present at residues arginine 337 to alanine 342.

Belongs to the ATP:guanido phosphotransferase family.

The enzyme catalyses L-arginyl-[protein] + ATP = N(omega)-phospho-L-arginyl-[protein] + ADP + H(+). Its activity is regulated as follows. Appears to be allosterically activated by the binding of pArg-containing polypeptides to the pArg-binding pocket localized in the C-terminal domain of McsB. Catalyzes the specific phosphorylation of arginine residues in a large number of proteins. Is part of the bacterial stress response system. Protein arginine phosphorylation has a physiologically important role and is involved in the regulation of many critical cellular processes, such as protein homeostasis, motility, competence, and stringent and stress responses, by regulating gene expression and protein activity. This is Protein-arginine kinase from Bacillus velezensis (strain DSM 23117 / BGSC 10A6 / LMG 26770 / FZB42) (Bacillus amyloliquefaciens subsp. plantarum).